A 192-amino-acid polypeptide reads, in one-letter code: dTDP-4-amino-4,6-dideoxy-D-glucose acyltransferase (192 aa).

It belongs to the transferase hexapeptide repeat family.

The catalysed reaction is dTDP-4-amino-4,6-dideoxy-alpha-D-glucose + acetyl-CoA = dTDP-4-acetamido-4,6-dideoxy-alpha-D-glucose + CoA + H(+). It participates in bacterial outer membrane biogenesis; lipopolysaccharide biosynthesis. Its function is as follows. Catalyzes the conversion of dTDP-4-amino-4,6-dideoxy-D-glucose (dTDP-D-Qui4N) to dTDP-4-acetamido-4,6-dideoxy-D-glucose (dTDP-D-Qui4NAc). In Escherichia coli, this protein is dTDP-4-amino-4,6-dideoxy-D-glucose acyltransferase (vioB).